The sequence spans 699 residues: Protein STRUBBELIG-RECEPTOR FAMILY 5 (699 aa).

A signal peptide spans 1–22 (MTQKLVRLVIVSLAITVTLLQA). Residues 23–273 (KTDNQEVSAL…DGGGITAGTG (251 aa)) are Extracellular-facing. 5 LRR repeats span residues 93 to 115 (SLTT…LPPN), 116 to 136 (IANL…SLSQ), 139 to 161 (NLQS…FQKL), 163 to 186 (KLET…ANLT), and 187 to 209 (SLKK…RNLA). The N-linked (GlcNAc...) asparagine glycan is linked to asparagine 184. A disordered region spans residues 239-263 (NDWSTETAPPPPPGVKYGRKSSGSK). Residues 274–294 (MVIAGACLGVLVLIIVLIALV) form a helical membrane-spanning segment. The Cytoplasmic portion of the chain corresponds to 295-699 (SKKKSSLSPH…SYRAHDDYDY (405 aa)). Phosphoserine is present on serine 368. Positions 404 to 675 (FSPGNLLGEG…SEVVEALVRM (272 aa)) constitute a Protein kinase domain. Residues 410–418 (LGEGSIGRV) and lysine 432 each bind ATP.

Belongs to the protein kinase superfamily. Ser/Thr protein kinase family. As to expression, expressed in leaves and flowers.

It localises to the membrane. This chain is Protein STRUBBELIG-RECEPTOR FAMILY 5 (SRF5), found in Arabidopsis thaliana (Mouse-ear cress).